We begin with the raw amino-acid sequence, 597 residues long: Aspartate--tRNA(Asp/Asn) ligase (597 aa).

Glu-182 contacts L-aspartate. Residues 206–209 (QLFK) are aspartate. Arg-228 contributes to the L-aspartate binding site. ATP-binding positions include 228–230 (RDE) and Gln-237. His-455 is an L-aspartate binding site. An ATP-binding site is contributed by Glu-489. Position 496 (Arg-496) interacts with L-aspartate. Residue 541–544 (GFDR) participates in ATP binding.

Belongs to the class-II aminoacyl-tRNA synthetase family. Type 1 subfamily. Homodimer.

It is found in the cytoplasm. It carries out the reaction tRNA(Asx) + L-aspartate + ATP = L-aspartyl-tRNA(Asx) + AMP + diphosphate. Its function is as follows. Aspartyl-tRNA synthetase with relaxed tRNA specificity since it is able to aspartylate not only its cognate tRNA(Asp) but also tRNA(Asn). Reaction proceeds in two steps: L-aspartate is first activated by ATP to form Asp-AMP and then transferred to the acceptor end of tRNA(Asp/Asn). The chain is Aspartate--tRNA(Asp/Asn) ligase from Desulfosudis oleivorans (strain DSM 6200 / JCM 39069 / Hxd3) (Desulfococcus oleovorans).